The primary structure comprises 744 residues: FHF complex subunit HOOK-interacting protein 2B (744 aa).

2 disordered regions span residues 184 to 213 and 510 to 530; these read KTAR…LNRD and LDSG…SSDG. A compositionally biased stretch (basic and acidic residues) spans 197–213; the sequence is AGYRDKDCPHSDALNRD.

It belongs to the FHIP family. In terms of tissue distribution, expressed in colon.

In terms of biological role, able to activate MAPK/ERK and TGFB signaling pathways. May regulate the activity of genes involved in intestinal barrier function and immunoprotective inflammation. May play a role in cell proliferation. This Mus musculus (Mouse) protein is FHF complex subunit HOOK-interacting protein 2B.